A 218-amino-acid polypeptide reads, in one-letter code: MTIGIVVFPGSNCDRDVHWATQGCLGMSTRFLWHESTDLNGLEAVVLPGGFSYGDYLRCGAIARFAPVLSSLLEFVNKGGKVLGICNGFQILTELGLLPGALTRNQELHFICDTVPLLISSQRTQWFKNYNQSKNIFLPIAHGEGRYQCSESILKKLQDEDSIALKYKNNPNGSINDIAAITNKSGNVLGMMPHPERAADKDIGGIDGIKILQALLSN.

Residues 2–218 (TIGIVVFPGS…IKILQALLSN (217 aa)) form the Glutamine amidotransferase type-1 domain. Catalysis depends on Cys-86, which acts as the Nucleophile. Active-site residues include His-194 and Glu-196.

As to quaternary structure, part of the FGAM synthase complex composed of 1 PurL, 1 PurQ and 2 PurS subunits.

It localises to the cytoplasm. It carries out the reaction N(2)-formyl-N(1)-(5-phospho-beta-D-ribosyl)glycinamide + L-glutamine + ATP + H2O = 2-formamido-N(1)-(5-O-phospho-beta-D-ribosyl)acetamidine + L-glutamate + ADP + phosphate + H(+). It catalyses the reaction L-glutamine + H2O = L-glutamate + NH4(+). Its pathway is purine metabolism; IMP biosynthesis via de novo pathway; 5-amino-1-(5-phospho-D-ribosyl)imidazole from N(2)-formyl-N(1)-(5-phospho-D-ribosyl)glycinamide: step 1/2. In terms of biological role, part of the phosphoribosylformylglycinamidine synthase complex involved in the purines biosynthetic pathway. Catalyzes the ATP-dependent conversion of formylglycinamide ribonucleotide (FGAR) and glutamine to yield formylglycinamidine ribonucleotide (FGAM) and glutamate. The FGAM synthase complex is composed of three subunits. PurQ produces an ammonia molecule by converting glutamine to glutamate. PurL transfers the ammonia molecule to FGAR to form FGAM in an ATP-dependent manner. PurS interacts with PurQ and PurL and is thought to assist in the transfer of the ammonia molecule from PurQ to PurL. In Prochlorococcus marinus (strain SARG / CCMP1375 / SS120), this protein is Phosphoribosylformylglycinamidine synthase subunit PurQ.